The primary structure comprises 290 residues: 4-hydroxy-tetrahydrodipicolinate synthase (290 aa).

Position 44 (Thr-44) interacts with pyruvate. Tyr-132 serves as the catalytic Proton donor/acceptor. Residue Lys-160 is the Schiff-base intermediate with substrate of the active site. Ile-202 provides a ligand contact to pyruvate.

This sequence belongs to the DapA family. As to quaternary structure, homotetramer; dimer of dimers.

It is found in the cytoplasm. The catalysed reaction is L-aspartate 4-semialdehyde + pyruvate = (2S,4S)-4-hydroxy-2,3,4,5-tetrahydrodipicolinate + H2O + H(+). Its pathway is amino-acid biosynthesis; L-lysine biosynthesis via DAP pathway; (S)-tetrahydrodipicolinate from L-aspartate: step 3/4. Its function is as follows. Catalyzes the condensation of (S)-aspartate-beta-semialdehyde [(S)-ASA] and pyruvate to 4-hydroxy-tetrahydrodipicolinate (HTPA). This is 4-hydroxy-tetrahydrodipicolinate synthase from Geobacter sulfurreducens (strain ATCC 51573 / DSM 12127 / PCA).